The chain runs to 37 residues: Large ribosomal subunit protein bL36 (37 aa).

The protein belongs to the bacterial ribosomal protein bL36 family.

This Dehalococcoides mccartyi (strain ATCC BAA-2266 / KCTC 15142 / 195) (Dehalococcoides ethenogenes (strain 195)) protein is Large ribosomal subunit protein bL36.